The chain runs to 504 residues: MKRLKNLFIIFIFLFLLSQVSAYITFKNIDYNAQYLEPSKTYDLYITIESDKEINNTVVYIEPTNQISKENIEIIRGKQWIGHLFPYEYGVAHLIIKINPNAPNYDYKITGYCNYTKGNQQYSENRIFTLPVRGKANLVIETTNNILKVGNNQILLLLTNKGTGTAENIKIEFQNSNNLMVLGDNTFTISALGSKTSTYIPLTIFAKKEGVYSINYKISYKNPYNLLELTQKSETIEGDSKTETLTYQNKNIVEETGILTFNVFPNELISINIKNPTITVGKIENLTISIKNNYKDSLFVVQISKYFIGNNQKSIFIKKGETKNLTFQIKVDKEGVTSIPIVIYFDNNQIEKNLTINVVGKADLVLSGIDIESSFNEIKITGDIDNIGTGKAKSVLISIEKTKNIIPKKPYENYFVGTLNPDDYGSFELHCQINGNVNEIPLKISYRDEDNNLITIYKTVKISKEVVSLKTNNNGGINYLVVGIAILFCVGVVYLIYRGFVKKK.

A helical membrane pass occupies residues 6-26 (NLFIIFIFLFLLSQVSAYITF).

It to M.jannaschii MJ1506 and MJ1561.

The protein localises to the membrane. This is an uncharacterized protein from Methanocaldococcus jannaschii (strain ATCC 43067 / DSM 2661 / JAL-1 / JCM 10045 / NBRC 100440) (Methanococcus jannaschii).